Here is a 586-residue protein sequence, read N- to C-terminus: Adenine deaminase (586 aa).

The protein belongs to the metallo-dependent hydrolases superfamily. Adenine deaminase family. The cofactor is Mn(2+).

It catalyses the reaction adenine + H2O + H(+) = hypoxanthine + NH4(+). The sequence is that of Adenine deaminase from Bdellovibrio bacteriovorus (strain ATCC 15356 / DSM 50701 / NCIMB 9529 / HD100).